The chain runs to 247 residues: Protein GrpE (247 aa).

Disordered stretches follow at residues 1-64 (MNDE…QALD) and 214-247 (SMGP…EKSD). Composition is skewed to polar residues over residues 30-39 (DEPSLSNVAE), 49-63 (DVTS…SQAL), and 228-241 (TEQS…TDQQ).

Belongs to the GrpE family. Homodimer.

It localises to the cytoplasm. Functionally, participates actively in the response to hyperosmotic and heat shock by preventing the aggregation of stress-denatured proteins, in association with DnaK and GrpE. It is the nucleotide exchange factor for DnaK and may function as a thermosensor. Unfolded proteins bind initially to DnaJ; upon interaction with the DnaJ-bound protein, DnaK hydrolyzes its bound ATP, resulting in the formation of a stable complex. GrpE releases ADP from DnaK; ATP binding to DnaK triggers the release of the substrate protein, thus completing the reaction cycle. Several rounds of ATP-dependent interactions between DnaJ, DnaK and GrpE are required for fully efficient folding. This is Protein GrpE from Prochlorococcus marinus (strain MIT 9211).